Here is a 462-residue protein sequence, read N- to C-terminus: tRNA modification GTPase MnmE (462 aa).

Arg23, Glu88, and Arg127 together coordinate (6S)-5-formyl-5,6,7,8-tetrahydrofolate. Positions 224 to 383 (GLATVIIGRP…LEKAIADLFF (160 aa)) constitute a TrmE-type G domain. Asn234 serves as a coordination point for K(+). GTP is bound by residues 234-239 (NVGKSS), 253-259 (TDIPGTT), and 278-281 (DTAG). Mg(2+) is bound at residue Ser238. K(+)-binding residues include Thr253, Ile255, and Thr258. Thr259 lines the Mg(2+) pocket. Lys462 contacts (6S)-5-formyl-5,6,7,8-tetrahydrofolate.

This sequence belongs to the TRAFAC class TrmE-Era-EngA-EngB-Septin-like GTPase superfamily. TrmE GTPase family. Homodimer. Heterotetramer of two MnmE and two MnmG subunits. It depends on K(+) as a cofactor.

The protein localises to the cytoplasm. In terms of biological role, exhibits a very high intrinsic GTPase hydrolysis rate. Involved in the addition of a carboxymethylaminomethyl (cmnm) group at the wobble position (U34) of certain tRNAs, forming tRNA-cmnm(5)s(2)U34. This chain is tRNA modification GTPase MnmE, found in Geobacillus thermodenitrificans (strain NG80-2).